Here is a 140-residue protein sequence, read N- to C-terminus: Aspartate 1-decarboxylase (140 aa).

The Schiff-base intermediate with substrate; via pyruvic acid role is filled by Ser25. Ser25 is subject to Pyruvic acid (Ser). A substrate-binding site is contributed by Thr57. Catalysis depends on Tyr58, which acts as the Proton donor. 73–75 (GAA) provides a ligand contact to substrate.

This sequence belongs to the PanD family. As to quaternary structure, heterooctamer of four alpha and four beta subunits. The cofactor is pyruvate. In terms of processing, is synthesized initially as an inactive proenzyme, which is activated by self-cleavage at a specific serine bond to produce a beta-subunit with a hydroxyl group at its C-terminus and an alpha-subunit with a pyruvoyl group at its N-terminus.

It is found in the cytoplasm. The catalysed reaction is L-aspartate + H(+) = beta-alanine + CO2. It functions in the pathway cofactor biosynthesis; (R)-pantothenate biosynthesis; beta-alanine from L-aspartate: step 1/1. Its function is as follows. Catalyzes the pyruvoyl-dependent decarboxylation of aspartate to produce beta-alanine. The polypeptide is Aspartate 1-decarboxylase (Persephonella marina (strain DSM 14350 / EX-H1)).